The chain runs to 309 residues: Prephenate dehydratase (309 aa).

The Prephenate dehydratase domain maps to 3–191; it reads GIAYLGPEGT…ARTRFVLVGC (189 aa). An ACT domain is found at 205 to 282; the sequence is SVVLRLDNVP…ADVRYLGSWP (78 aa).

As to quaternary structure, homodimer.

It carries out the reaction prephenate + H(+) = 3-phenylpyruvate + CO2 + H2O. It functions in the pathway amino-acid biosynthesis; L-phenylalanine biosynthesis; phenylpyruvate from prephenate: step 1/1. This Mycolicibacterium gilvum (strain PYR-GCK) (Mycobacterium gilvum (strain PYR-GCK)) protein is Prephenate dehydratase (pheA).